A 77-amino-acid polypeptide reads, in one-letter code: Cell division topological specificity factor (77 aa).

This sequence belongs to the MinE family.

Its function is as follows. Prevents the cell division inhibition by proteins MinC and MinD at internal division sites while permitting inhibition at polar sites. This ensures cell division at the proper site by restricting the formation of a division septum at the midpoint of the long axis of the cell. This is Cell division topological specificity factor from Helicobacter pylori (strain HPAG1).